A 172-amino-acid chain; its full sequence is MEKMYNVGKIVNTHGLIGEIRVIATTDFPEERFQVGNTVYLFEKNSKKPEKLIIRSHRKHKNFDLLMFEGLTGIHQVERMKEGVLKIKEAQLTDLEENEFYFHEIIGCTVVTTDGEELGEITEILTPGANDVWVVKGADKKEKLIPYIADVVKDINTNDKKITIEVMEGLLD.

One can recognise a PRC barrel domain in the interval 97 to 170 (ENEFYFHEII…KITIEVMEGL (74 aa)).

It belongs to the RimM family. Binds ribosomal protein uS19.

It is found in the cytoplasm. Functionally, an accessory protein needed during the final step in the assembly of 30S ribosomal subunit, possibly for assembly of the head region. Essential for efficient processing of 16S rRNA. May be needed both before and after RbfA during the maturation of 16S rRNA. It has affinity for free ribosomal 30S subunits but not for 70S ribosomes. This chain is Ribosome maturation factor RimM, found in Listeria innocua serovar 6a (strain ATCC BAA-680 / CLIP 11262).